The sequence spans 549 residues: Pyrophosphate--fructose 6-phosphate 1-phosphotransferase (549 aa).

Diphosphate is bound at residue Gly-78. Position 172 (Asp-172) interacts with Mg(2+). Substrate-binding positions include Thr-200–Asp-202, Lys-239–Tyr-240, Met-247–Arg-249, Glu-308, and Tyr-421–Arg-424. The active-site Proton acceptor is the Asp-202.

The protein belongs to the phosphofructokinase type A (PFKA) family. PPi-dependent PFK group II subfamily. Clade 'Long' sub-subfamily. In terms of assembly, homodimer. The cofactor is Mg(2+).

Its subcellular location is the cytoplasm. The catalysed reaction is beta-D-fructose 6-phosphate + diphosphate = beta-D-fructose 1,6-bisphosphate + phosphate + H(+). The protein operates within carbohydrate degradation; glycolysis; D-glyceraldehyde 3-phosphate and glycerone phosphate from D-glucose: step 3/4. Non-allosteric. Functionally, catalyzes the phosphorylation of D-fructose 6-phosphate, the first committing step of glycolysis. Uses inorganic phosphate (PPi) as phosphoryl donor instead of ATP like common ATP-dependent phosphofructokinases (ATP-PFKs), which renders the reaction reversible, and can thus function both in glycolysis and gluconeogenesis. Consistently, PPi-PFK can replace the enzymes of both the forward (ATP-PFK) and reverse (fructose-bisphosphatase (FBPase)) reactions. This Porphyromonas gingivalis (Bacteroides gingivalis) protein is Pyrophosphate--fructose 6-phosphate 1-phosphotransferase.